A 468-amino-acid polypeptide reads, in one-letter code: Glutamate--tRNA ligase (468 aa).

5-7 (RIA) provides a ligand contact to L-glutamate. The short motif at 8-18 (PSPTGDPHVGT) is the 'HIGH' region element. Histidine 15 contributes to the ATP binding site. Residues glutamate 41, 187–191 (YHLAN), and arginine 205 contribute to the L-glutamate site. ATP is bound by residues glutamate 208, leucine 236, 243–247 (KISKR), and lysine 246. The short motif at 243–247 (KISKR) is the 'KMSKS' region element. Residues 432-447 (QPLRAALTGSLETPGL) are interaction with tRNA.

Belongs to the class-I aminoacyl-tRNA synthetase family. Glutamate--tRNA ligase type 1 subfamily. In terms of assembly, monomer.

The protein resides in the cytoplasm. It carries out the reaction tRNA(Glu) + L-glutamate + ATP = L-glutamyl-tRNA(Glu) + AMP + diphosphate. With respect to regulation, in the absence of bound tRNA, ATP is bound in a non-productive mode, and the enzyme cannot activate amino acids. In terms of biological role, catalyzes the attachment of glutamate to tRNA(Glu) in a two-step reaction: glutamate is first activated by ATP to form Glu-AMP and then transferred to the acceptor end of tRNA(Glu). This is Glutamate--tRNA ligase from Thermus thermophilus (strain ATCC 27634 / DSM 579 / HB8).